A 431-amino-acid chain; its full sequence is Adenylosuccinate synthetase (431 aa).

Residues 12 to 18 and 40 to 42 contribute to the GTP site; these read GDEGKGK and GHT. Asp13 functions as the Proton acceptor in the catalytic mechanism. Positions 13 and 40 each coordinate Mg(2+). Residues 13–16, 38–41, Thr130, Arg144, Gln224, Thr239, and Arg303 each bind IMP; these read DEGK and NAGH. Residue His41 is the Proton donor of the active site. 299-305 lines the substrate pocket; it reads STTGRPR. GTP-binding positions include Arg305, 331-333, and 413-415; these read KAD and SIG.

Belongs to the adenylosuccinate synthetase family. In terms of assembly, homodimer. Requires Mg(2+) as cofactor.

It localises to the cytoplasm. The catalysed reaction is IMP + L-aspartate + GTP = N(6)-(1,2-dicarboxyethyl)-AMP + GDP + phosphate + 2 H(+). Its pathway is purine metabolism; AMP biosynthesis via de novo pathway; AMP from IMP: step 1/2. Functionally, plays an important role in the de novo pathway of purine nucleotide biosynthesis. Catalyzes the first committed step in the biosynthesis of AMP from IMP. The chain is Adenylosuccinate synthetase from Cytophaga hutchinsonii (strain ATCC 33406 / DSM 1761 / CIP 103989 / NBRC 15051 / NCIMB 9469 / D465).